We begin with the raw amino-acid sequence, 1121 residues long: CRISPR-associated endonuclease Cas9 1 (1121 aa).

Residue Asp-9 is the For RuvC-like nuclease domain of the active site. Asp-9, Glu-509, and Glu-513 together coordinate Mg(2+). The region spanning 516–684 is the HNH Cas9-type domain; it reads EDDEKKAIQK…VRKKFIERNL (169 aa). Catalysis depends on His-599, which acts as the Proton acceptor for HNH nuclease domain. His-738 is a Mg(2+) binding site.

The protein belongs to the CRISPR-associated protein Cas9 family. Subtype II-A subfamily. In terms of assembly, monomer. Binds crRNA and tracrRNA. Mg(2+) is required as a cofactor.

Functionally, CRISPR (clustered regularly interspaced short palindromic repeat) is an adaptive immune system that provides protection against mobile genetic elements (viruses, transposable elements and conjugative plasmids). CRISPR clusters contain spacers, sequences complementary to antecedent mobile elements, and target invading nucleic acids. CRISPR clusters are transcribed and processed into CRISPR RNA (crRNA). In type II CRISPR systems correct processing of pre-crRNA requires a trans-encoded small RNA (tracrRNA), endogenous ribonuclease 3 (rnc) and this protein. The tracrRNA serves as a guide for ribonuclease 3-aided processing of pre-crRNA. Subsequently Cas9/crRNA/tracrRNA endonucleolytically cleaves linear or circular dsDNA target complementary to the spacer; Cas9 is inactive in the absence of the 2 guide RNAs (gRNA). Cas9 recognizes the protospacer adjacent motif (PAM) in the CRISPR repeat sequences to help distinguish self versus nonself, as targets within the bacterial CRISPR locus do not have PAMs. PAM recognition is also required for catalytic activity. Cuts target DNA when Cas9 and gRNAs are mixed. In Streptococcus thermophilus (strain ATCC BAA-491 / LMD-9), this protein is CRISPR-associated endonuclease Cas9 1.